We begin with the raw amino-acid sequence, 161 residues long: MPSFDVVSKTDLAEVDNALAGITREVAQRFDFKGSKCSVERKDQMITVLADDDSKLKTMHELLSVHFTRRKVDPKALDYKTVEKASGNTVRQEVRIKDGVETVLAKRLVKEIKDAKLKVQVAIQGDELRVTGKKRDDLQEAIALLRKLDVDQPLQYINFRD.

It belongs to the YajQ family.

Functionally, nucleotide-binding protein. In Paramagnetospirillum magneticum (strain ATCC 700264 / AMB-1) (Magnetospirillum magneticum), this protein is Nucleotide-binding protein amb3630.